A 509-amino-acid polypeptide reads, in one-letter code: Putative aldehyde dehydrogenase family 7 member A1 homolog (509 aa).

244–249 serves as a coordination point for NAD(+); it reads GSTEVG. The active-site Proton acceptor is Glu-266. Cys-300 serves as the catalytic Nucleophile.

This sequence belongs to the aldehyde dehydrogenase family. Homotetramer.

It carries out the reaction an aldehyde + NAD(+) + H2O = a carboxylate + NADH + 2 H(+). The chain is Putative aldehyde dehydrogenase family 7 member A1 homolog from Dictyostelium discoideum (Social amoeba).